The following is a 769-amino-acid chain: Bifunctional glycosyltransferase pgtA (769 aa).

An N-acetylgalactosamine 3-beta-galactosyltransferase region spans residues 25–210; sequence YQGINNLIIS…SVIFKRSIFT (186 aa). Positions 410 to 441 are enriched in low complexity; it reads NNINNNNNNNNNNNNNNNNNNNNNNNNNNNNN. Residues 410–442 form a disordered region; the sequence is NNINNNNNNNNNNNNNNNNNNNNNNNNNNNNNS. The alpha-1,2-fucosyltransferase stretch occupies residues 442 to 769; it reads SILNFISGIN…SVHIGELFIS (328 aa).

This sequence belongs to the glycosyltransferase 2 family.

It catalyses the reaction an N-acetyl-beta-D-glucosaminyl derivative + UDP-alpha-D-galactose = a beta-D-galactosyl-(1-&gt;3)-N-acetyl-beta-D-glucosaminyl derivative + UDP + H(+). The catalysed reaction is a beta-D-galactosyl-(1-&gt;3)-N-acetyl-beta-D-glucosaminyl derivative + GDP-beta-L-fucose = an alpha-L-Fuc-(1-&gt;2)-beta-D-Gal-(1-&gt;3)-beta-D-GlcNAc derivative + GDP + H(+). In terms of biological role, bifunctional protein composed of 2 glycosyltransferase domains involved in glycosylating skp1. The N-terminal part catalyzes the transfer of a galactose residue to GlcNAc-skp1 in a beta 1-3 linkage. The C-terminal part catalyzes the transfer of a fucose residue to Gal-GlcNAc-skp1 in an alpha 1-2 linkage. This Dictyostelium discoideum (Social amoeba) protein is Bifunctional glycosyltransferase pgtA (pgtA).